The following is a 349-amino-acid chain: Crinkler effector protein 5 (349 aa).

Residues 1–17 form the signal peptide; it reads MVKLFCSIVGVAGSPFS. Residues 18–57 are LQLFLAK domain; sequence VEVNEGKTVDDLKKAIKAENLDDPTLRNVAPKNLQLFLAK. Residues 58–108 are DWL domain; that stretch reads KGDAWLRYNEDLDTYLQSEIDTSSYLHMRASWKLSKPTLFGPDVSLGEDVV. The short motif at 109–115 is the HVLVXXP motif element; it reads HVLVVVP.

This sequence belongs to the Crinkler effector family.

It localises to the secreted. It is found in the host nucleus. Its function is as follows. Secreted effector that elicits necrosis in host plants, a characteristic of plant innate immunity. The polypeptide is Crinkler effector protein 5 (Phytophthora infestans (Potato late blight agent)).